The sequence spans 344 residues: Anthranilate phosphoribosyltransferase (344 aa).

Residues Gly80, 83 to 84 (GD), Thr88, 90 to 93 (NVST), 108 to 116 (KHGNRSVSS), and Ser120 contribute to the 5-phospho-alpha-D-ribose 1-diphosphate site. An anthranilate-binding site is contributed by Gly80. Ser92 serves as a coordination point for Mg(2+). Asn111 lines the anthranilate pocket. Arg166 contributes to the anthranilate binding site. Residues Asp225 and Glu226 each coordinate Mg(2+).

This sequence belongs to the anthranilate phosphoribosyltransferase family. As to quaternary structure, homodimer. Mg(2+) serves as cofactor.

It catalyses the reaction N-(5-phospho-beta-D-ribosyl)anthranilate + diphosphate = 5-phospho-alpha-D-ribose 1-diphosphate + anthranilate. It participates in amino-acid biosynthesis; L-tryptophan biosynthesis; L-tryptophan from chorismate: step 2/5. Its function is as follows. Catalyzes the transfer of the phosphoribosyl group of 5-phosphorylribose-1-pyrophosphate (PRPP) to anthranilate to yield N-(5'-phosphoribosyl)-anthranilate (PRA). This is Anthranilate phosphoribosyltransferase from Legionella pneumophila (strain Lens).